A 923-amino-acid polypeptide reads, in one-letter code: Neuropilin-1 (923 aa).

A signal peptide spans 1-21 (MERGLPLLCAVLALVLAPAGA). Topologically, residues 22–856 (FRNDKCGDTI…PGNVLKTLDP (835 aa)) are extracellular. 3 cysteine pairs are disulfide-bonded: Cys-27/Cys-54, Cys-82/Cys-104, and Cys-147/Cys-173. 2 consecutive CUB domains span residues 27-141 (CGDT…YEIF) and 147-265 (CSQN…YSVL). Asn-150 carries N-linked (GlcNAc...) asparagine glycosylation. 3 residues coordinate Ca(2+): Glu-195, Asp-209, and Asp-250. The cysteines at positions 206 and 228 are disulfide-linked. N-linked (GlcNAc...) asparagine glycans are attached at residues Asn-261, Asn-300, and Asn-522. 2 disulfides stabilise this stretch: Cys-275–Cys-424 and Cys-431–Cys-583. F5/8 type C domains lie at 275–424 (CMEA…VYGC) and 431–583 (CSGM…LLGC). The O-linked (Xyl...) (chondroitin sulfate) serine; alternate glycan is linked to Ser-612. A glycan (O-linked (Xyl...) (heparan sulfate) serine; alternate) is linked at Ser-612. The region spanning 645 to 811 (TYGFNCEFGW…NHISQEDCAK (167 aa)) is the MAM domain. The interval 820 to 845 (PEIKIDETGSTPGYEGEGEGDKNISR) is disordered. Ser-829 carries an O-linked (Xyl...) (chondroitin sulfate) serine glycan. Asn-842 is a glycosylation site (N-linked (GlcNAc...) asparagine). Residues 857–879 (ILITIIAMSALGVLLGAVCGVVL) traverse the membrane as a helical segment. The Cytoplasmic portion of the chain corresponds to 880-923 (YCACWHNGMSERNLSALENYNFELVDGVKLKKDKLNTQSTYSEA). At Ser-894 the chain carries Phosphoserine.

It belongs to the neuropilin family. In terms of assembly, homodimer, and heterodimer with NRP2. Interacts with FER. Interacts with PLXNB1. Interacts with VEGFA. Interacts with ABCB8/MITOSUR in mitochondria. As to quaternary structure, (Microbial infection) Interacts with SARS coronavirus-2/SARS-CoV-2 spike protein S1 (via the CendR motif RRAR). The expression of isoforms 1 and 2 does not seem to overlap. Expressed in olfactory epithelium (at protein level). Expressed in fibroblasts (at protein level). Expressed by the blood vessels of different tissues. In the developing embryo it is found predominantly in the nervous system. In adult tissues, it is highly expressed in heart and placenta; moderately in lung, liver, skeletal muscle, kidney and pancreas; and low in adult brain. Expressed in the central nervous system, including olfactory related regions such as the olfactory tubercles and paraolfactory gyri. As to expression, the expression of isoforms 1 and 2 does not seem to overlap. Found in liver hepatocytes, kidney distal and proximal tubules.

Its subcellular location is the secreted. The protein resides in the mitochondrion membrane. The protein localises to the cell membrane. It localises to the cytoplasm. Its function is as follows. Cell-surface receptor involved in the development of the cardiovascular system, in angiogenesis, in the formation of certain neuronal circuits and in organogenesis outside the nervous system. Mediates the chemorepulsant activity of semaphorins. Recognizes a C-end rule (CendR) motif R/KXXR/K on its ligands which causes cellular internalization and vascular leakage. It binds to semaphorin 3A, the PLGF-2 isoform of PGF, the VEGF165 isoform of VEGFA and VEGFB. Coexpression with KDR results in increased VEGF165 binding to KDR as well as increased chemotaxis. Regulates VEGF-induced angiogenesis. Binding to VEGFA initiates a signaling pathway needed for motor neuron axon guidance and cell body migration, including for the caudal migration of facial motor neurons from rhombomere 4 to rhombomere 6 during embryonic development. Regulates mitochondrial iron transport via interaction with ABCB8/MITOSUR. In terms of biological role, (Microbial infection) Acts as a host factor for human coronavirus SARS-CoV-2 infection. Recognizes and binds to CendR motif RRAR on SARS-CoV-2 spike protein S1 which enhances SARS-CoV-2 infection. Binds VEGF-165 and may inhibit its binding to cells. May induce apoptosis by sequestering VEGF-165. May bind as well various members of the semaphorin family. Its expression has an averse effect on blood vessel number and integrity. The protein is Neuropilin-1 of Homo sapiens (Human).